The following is a 257-amino-acid chain: Flavodoxin/ferredoxin--NADP reductase (257 aa).

Residues 2–110 (NPWINANVLK…EKSFGFFTLD (109 aa)) form the FAD-binding FR-type domain. Residues 59–62 (RAYS), Tyr-75, 83–85 (KLS), and Thr-125 each bind FAD. Residues 152–153 (VR), 182–183 (SR), Arg-193, 223–225 (NPA), and Asp-229 each bind NADP(+). 256-257 (YW) contributes to the FAD binding site.

This sequence belongs to the ferredoxin--NADP reductase type 1 family. Requires FAD as cofactor.

It is found in the cytoplasm. It carries out the reaction 2 reduced [2Fe-2S]-[ferredoxin] + NADP(+) + H(+) = 2 oxidized [2Fe-2S]-[ferredoxin] + NADPH. The enzyme catalyses reduced [flavodoxin] + NADP(+) = oxidized [flavodoxin] + NADPH + 2 H(+). Functionally, transports electrons between flavodoxin or ferredoxin and NADPH. The sequence is that of Flavodoxin/ferredoxin--NADP reductase (fpr) from Buchnera aphidicola subsp. Schizaphis graminum (strain Sg).